A 140-amino-acid chain; its full sequence is Small ribosomal subunit protein uS12 (140 aa).

Asp102 is modified (3-methylthioaspartic acid).

Belongs to the universal ribosomal protein uS12 family. In terms of assembly, part of the 30S ribosomal subunit. Contacts proteins S8 and S17. May interact with IF1 in the 30S initiation complex.

Its function is as follows. With S4 and S5 plays an important role in translational accuracy. Interacts with and stabilizes bases of the 16S rRNA that are involved in tRNA selection in the A site and with the mRNA backbone. Located at the interface of the 30S and 50S subunits, it traverses the body of the 30S subunit contacting proteins on the other side and probably holding the rRNA structure together. The combined cluster of proteins S8, S12 and S17 appears to hold together the shoulder and platform of the 30S subunit. This chain is Small ribosomal subunit protein uS12, found in Bacillus cytotoxicus (strain DSM 22905 / CIP 110041 / 391-98 / NVH 391-98).